The primary structure comprises 569 residues: Urease subunit alpha (569 aa).

Residues 131–569 (GGIDAHIHWI…LPLAQRYFLF (439 aa)) form the Urease domain. Ni(2+) is bound by residues histidine 136, histidine 138, and lysine 219. N6-carboxylysine is present on lysine 219. Histidine 221 contacts substrate. The Ni(2+) site is built by histidine 248 and histidine 274. The active-site Proton donor is the histidine 322. Aspartate 362 is a Ni(2+) binding site.

Belongs to the metallo-dependent hydrolases superfamily. Urease alpha subunit family. In terms of assembly, heterotrimer of UreA (gamma), UreB (beta) and UreC (alpha) subunits. Three heterotrimers associate to form the active enzyme. The cofactor is Ni cation. Post-translationally, carboxylation allows a single lysine to coordinate two nickel ions.

The protein localises to the cytoplasm. The enzyme catalyses urea + 2 H2O + H(+) = hydrogencarbonate + 2 NH4(+). It functions in the pathway nitrogen metabolism; urea degradation; CO(2) and NH(3) from urea (urease route): step 1/1. The sequence is that of Urease subunit alpha from Magnetococcus marinus (strain ATCC BAA-1437 / JCM 17883 / MC-1).